Consider the following 257-residue polypeptide: uncharacterized protein (257 aa).

Residues 6-26 (IFWLNLAAIIIISIVVSGGMF) traverse the membrane as a helical segment.

Belongs to the staphylococcal tandem lipoprotein family.

Its subcellular location is the cell membrane. This is an uncharacterized protein from Staphylococcus aureus (strain N315).